A 111-amino-acid polypeptide reads, in one-letter code: Wound-induced proteinase inhibitor 1 (111 aa).

The first 23 residues, 1 to 23 (MESKFAHIIVFFLLATSFETLMA), serve as a signal peptide directing secretion. A propeptide spanning residues 24-36 (RKEIDGPEVIELL) is cleaved from the precursor.

The protein belongs to the protease inhibitor I13 (potato type I serine protease inhibitor) family.

It localises to the secreted. In Solanum lycopersicum (Tomato), this protein is Wound-induced proteinase inhibitor 1 (PIIF).